A 226-amino-acid chain; its full sequence is MATELPYDLTPELAPLSWLIGSWEGQGRLGDGSADTEIFYQRVDFTELGLPFVEYRAESWLCEADGTLLRPLTVESGFWQVDRERRDGDVGPGMRPADIVPAFRSAEDVERLRAGDEGFGLTATIAHPGSLSELYYGRIKGPQLQLATEAILRGSAAGPYHRATRMAGLVNGQLFWRWDVADAAGAELEAHASAILDRMPSAAEGRLAPGAERPRGAGGRKQGEQS.

Residues 21-27 carry the GXWXGXG motif; the sequence is GSWEGQG. His191 contributes to the heme b binding site. Positions 201-226 are disordered; sequence SAAEGRLAPGAERPRGAGGRKQGEQS.

It belongs to the nitrobindin family. As to quaternary structure, homodimer. It depends on heme b as a cofactor.

It catalyses the reaction peroxynitrite = nitrate. It functions in the pathway nitrogen metabolism. Heme-binding protein able to scavenge peroxynitrite and to protect free L-tyrosine against peroxynitrite-mediated nitration, by acting as a peroxynitrite isomerase that converts peroxynitrite to nitrate. Therefore, this protein likely plays a role in peroxynitrite sensing and in the detoxification of reactive nitrogen and oxygen species (RNS and ROS, respectively). Is able to bind nitric oxide (NO) in vitro, but may act as a sensor of peroxynitrite levels in vivo. The protein is Peroxynitrite isomerase of Micrococcus luteus (strain ATCC 4698 / DSM 20030 / JCM 1464 / CCM 169 / CCUG 5858 / IAM 1056 / NBRC 3333 / NCIMB 9278 / NCTC 2665 / VKM Ac-2230) (Micrococcus lysodeikticus).